Here is a 535-residue protein sequence, read N- to C-terminus: Peptide chain release factor 3 (535 aa).

Residues 8 to 277 form the tr-type G domain; that stretch reads KRRRTFAIIS…TLVELAPPPG (270 aa). GTP contacts are provided by residues 17–24, 85–89, and 139–142; these read SHPDAGKT, DTPGH, and NKLD.

This sequence belongs to the TRAFAC class translation factor GTPase superfamily. Classic translation factor GTPase family. PrfC subfamily.

The protein resides in the cytoplasm. Increases the formation of ribosomal termination complexes and stimulates activities of RF-1 and RF-2. It binds guanine nucleotides and has strong preference for UGA stop codons. It may interact directly with the ribosome. The stimulation of RF-1 and RF-2 is significantly reduced by GTP and GDP, but not by GMP. The polypeptide is Peptide chain release factor 3 (Nitrosomonas europaea (strain ATCC 19718 / CIP 103999 / KCTC 2705 / NBRC 14298)).